Consider the following 103-residue polypeptide: Pyrimidine/purine nucleoside phosphorylase (103 aa).

It belongs to the nucleoside phosphorylase PpnP family.

The enzyme catalyses a purine D-ribonucleoside + phosphate = a purine nucleobase + alpha-D-ribose 1-phosphate. It catalyses the reaction adenosine + phosphate = alpha-D-ribose 1-phosphate + adenine. It carries out the reaction cytidine + phosphate = cytosine + alpha-D-ribose 1-phosphate. The catalysed reaction is guanosine + phosphate = alpha-D-ribose 1-phosphate + guanine. The enzyme catalyses inosine + phosphate = alpha-D-ribose 1-phosphate + hypoxanthine. It catalyses the reaction thymidine + phosphate = 2-deoxy-alpha-D-ribose 1-phosphate + thymine. It carries out the reaction uridine + phosphate = alpha-D-ribose 1-phosphate + uracil. The catalysed reaction is xanthosine + phosphate = alpha-D-ribose 1-phosphate + xanthine. Its function is as follows. Catalyzes the phosphorolysis of diverse nucleosides, yielding D-ribose 1-phosphate and the respective free bases. Can use uridine, adenosine, guanosine, cytidine, thymidine, inosine and xanthosine as substrates. Also catalyzes the reverse reactions. The protein is Pyrimidine/purine nucleoside phosphorylase of Shewanella baltica (strain OS195).